The following is a 568-amino-acid chain: Phosphoprotein (568 aa).

Disordered stretches follow at residues 1 to 23 and 38 to 320; these read MDQDAFILKEDSEVEREAPGGRE and SEPT…GIGE. Positions 7–20 are enriched in basic and acidic residues; the sequence is ILKEDSEVEREAPG. Residues 33 to 41 form an N0 binding region; it reads DAVLSSEPT. Over residues 50 to 59 the composition is skewed to polar residues; sequence LHNTINTPQG. S68 is subject to Phosphoserine; by host. Residues 83–101 are compositionally biased toward basic and acidic residues; that stretch reads RSGEESRVSGRTSKPEAEA. Phosphoserine; by host is present on S125. A compositionally biased stretch (basic and acidic residues) spans 150 to 168; sequence GIEDENREMAAHPDKRGED. Over residues 191–206 the composition is skewed to polar residues; the sequence is ASNNGRSMEPGSSHSA. S192, S249, S257, and S260 each carry phosphoserine; by host. Multimerization regions lie at residues 344-411 and 362-432; these read FESS…KRFS and ANYA…HIIT. The tract at residues 345–412 is bipartite nucleocapsid binding domain 1; that stretch reads ESSRDASYVF…FRDIYKRFSE (68 aa). A coiled-coil region spans residues 364-429; it reads YAEMTFNVCG…LLMSNLSTLH (66 aa). 2 l protein binding regions span residues 412–445 and 413–445; these read EYQKEQNSLLMSNLSTLHIITDRGGKTDNTDSLT and YQKEQNSLLMSNLSTLHIITDRGGKTDNTDSLT. 2 positions are modified to phosphoserine; by host: S447 and S449. The segment at 479–568 is bipartite nucleocapsid binding domain 2; that stretch reads DLIREDEFRD…VEEDIESLTN (90 aa). The interval 479-568 is interaction with the nucleocapsid (N-RNA); it reads DLIREDEFRD…VEEDIESLTN (90 aa). The segment at 495–516 is disordered; the sequence is YQERDTEPRASNASRLLPSKEK. A formation of N-RNA complex involved in transcription and replication region spans residues 547 to 566; sequence KTDQEVKAVMELVEEDIESL.

The protein belongs to the respirovirus P protein family. As to quaternary structure, homotetramer. Interacts (via multimerization domain) with polymerase L; this interaction forms the polymerase complex. Interacts (via N-terminus) with N0; this interaction allows P to chaperon N0 before encapsidation and form the N-P complex. Interacts (via C-terminus) with N-RNA template; this interaction positions the polymerase on the template. In terms of processing, phosphorylated by PKC/PRKCZ, and other unknown kinases. Phosphorylation is necessary for viral transcription and replication. The N-terminus contains the majority of phosphorylated sites. Ser-249 is the major site of phosphorylation, but is not necessary for most functions.

Its subcellular location is the host cytoplasm. Functionally, essential cofactor of the RNA polymerase L that plays a central role in the transcription and replication by forming the polymerase complex with RNA polymerase L and recruiting L to the genomic N-RNA template for RNA synthesis. Also plays a central role in the encapsidation of nascent RNA chains by forming the encapsidation complex with the nucleocapsid protein N (N-P complex). Acts as a chaperone for newly synthesized free N protein, so-called N0, allowing encapsidation of nascent RNA chains during replication. The nucleoprotein protein N prevents excessive phosphorylation of P, which leads to down-regulation of viral transcription/ replication. Participates, together with N, in the formation of viral factories (viroplasms), which are large inclusions in the host cytoplasm where replication takes place. Recruits host PI4KB and remodel the host endoplasmic reticulum membrane to form viral replication factories. This is Phosphoprotein (P/V/C) from Sendai virus (strain Fushimi) (SeV).